Here is a 132-residue protein sequence, read N- to C-terminus: MKGFIVFSLSLCLVFTVCLAEDELMKEAVRKFLKCVACAEPGSELRTEYHKCSELKPERLKATMKACCDETMPAGSDEDARWALVCADDGILTKVCDCVKAKLPMAEVTTAEMEQFSKYKECAKKLNEEKCK.

Residues 1–20 (MKGFIVFSLSLCLVFTVCLA) form the signal peptide. Positions 21–30 (EDELMKEAVR) are excised as a propeptide.

Post-translationally, contains 5 disulfide bonds. As to expression, expressed by the venom gland.

Its subcellular location is the secreted. Functionally, probable ion channel inhibitor. The protein is U10-hexatoxin-Hi1a of Hadronyche infensa (Fraser island funnel-web spider).